We begin with the raw amino-acid sequence, 640 residues long: Probable potassium transport system protein Kup 2 (640 aa).

12 consecutive transmembrane segments (helical) span residues 19-39, 67-87, 118-138, 155-175, 181-201, 230-250, 265-285, 307-327, 355-375, 384-404, 415-435, and 437-457; these read LFSS…YGDI, VLSL…VVFV, GVVA…GVIT, EAAK…LFLV, GVIG…IAAL, FVGV…EALY, WLGL…ALLL, MVCL…SGVF, VYIP…VLVF, AYGI…FFVI, AVPL…ANLF, and IFDG…SMIT.

The protein belongs to the HAK/KUP transporter (TC 2.A.72) family.

It is found in the cell inner membrane. It catalyses the reaction K(+)(in) + H(+)(in) = K(+)(out) + H(+)(out). Transport of potassium into the cell. Likely operates as a K(+):H(+) symporter. The sequence is that of Probable potassium transport system protein Kup 2 from Syntrophobacter fumaroxidans (strain DSM 10017 / MPOB).